Reading from the N-terminus, the 320-residue chain is MRPPLTGSGGGFSGGRGRGGYSGGRGDGGFSGGRGGGGRGGGRGFSDRGGRGRGRGPPRGGARGGRGPAGRGGMKGGSKVIVEPHRHAGVFIAKGKEDALVTKNLVPGEAVYNEKRISVQNEDGTKTEYRVWNPFRSKLAAAILGGVDNIWIKPGAKVLYLGAASGTTVSHVSDLVGPEGCVYAVEFSHRSGRDLVNMAKKRTNVIPIIEDARHPAKYRMLVGMVDVIFSDVAQPDQARILALNASYFLKSGGHFVISIKANCIDSTVPAEAVFQTEVKKLQQEQFKPAEQVTLEPFERDHACVVGGYRMPKKPKAATAA.

A disordered region spans residues 1–79 (MRPPLTGSGG…GRGGMKGGSK (79 aa)). 2 stretches are compositionally biased toward gly residues: residues 7–44 (GSGG…GGRG) and 57–76 (PPRG…GMKG). Residues 167-168 (TT), 186-187 (EF), 211-212 (DA), and 231-234 (DVAQ) each bind S-adenosyl-L-methionine.

This sequence belongs to the methyltransferase superfamily. Fibrillarin family. As to quaternary structure, component of box C/D small nucleolar ribonucleoprotein (snoRNP) particles. Interacts with groundnut rosette virus long-distance movement protein; this interaction is required for virus long-distance movement protein transiting through host Cajal body and nucleolus, relocalization of fibrillarin to the cytoplasm, and in presence of viral RNA, leads to the formation of stable RNPs. Interacts (via GAR domain) with the hordeivirus TGB1 movement protein (via the first 82 amino acid residues). Interacts with PRMT11 and PRMT12. Interacts with MED19A. Post-translationally, methylated by PRMT11 and PRMT12. In terms of tissue distribution, expressed in roots and flowers. Expressed in leaves and stems. Expression levels decrease during aging.

The protein resides in the nucleus. It localises to the nucleolus. The catalysed reaction is a ribonucleotide in rRNA + S-adenosyl-L-methionine = a 2'-O-methylribonucleotide in rRNA + S-adenosyl-L-homocysteine + H(+). The enzyme catalyses L-glutaminyl-[histone H2A] + S-adenosyl-L-methionine = N(5)-methyl-L-glutaminyl-[histone H2A] + S-adenosyl-L-homocysteine + H(+). Functionally, S-adenosyl-L-methionine-dependent methyltransferase that has the ability to methylate both RNAs and proteins. Involved in pre-rRNA processing. Utilizes the methyl donor S-adenosyl-L-methionine to catalyze the site-specific 2'-hydroxyl methylation of ribose moieties in pre-ribosomal RNA. Site specificity is provided by a guide RNA that base pairs with the substrate. Methylation occurs at a characteristic distance from the sequence involved in base pairing with the guide RNA. Also acts as a protein methyltransferase by mediating methylation of 'Gln-105' of histone H2A (H2AQ105me), a modification that impairs binding of the FACT complex and is specifically present at 35S ribosomal DNA locus. Acts as a negative regulator of expression of immune responsive genes, including pathogenesis-related gene 1 (PR1), and of resistance against bacterial pathogen. Binds to MED19A, a positive regulator of PR1 expression, to repress the activator activity of MED19A. In response to the bacterial pathogen-associated molecular pattern (PAMP) elf18, associates with the long non-coding RNA (lncRNA) ELENA1 (At4g16355), and releases its repression of MED19A. Possesses ribonuclease activity toward rRNA in vitro. Binds phosphoinositides, phospholipids and phosphatidic acid in vitro. This is rRNA 2'-O-methyltransferase fibrillarin 2 from Arabidopsis thaliana (Mouse-ear cress).